The sequence spans 414 residues: tRNA dimethylallyltransferase (414 aa).

Position 33-40 (33-40 (APTASGKT)) interacts with ATP. 35–40 (TASGKT) contributes to the substrate binding site. 3 interaction with substrate tRNA regions span residues 58-61 (DSAL), 182-186 (QRITR), and 266-271 (RCVGYR).

It belongs to the IPP transferase family. Monomer. It depends on Mg(2+) as a cofactor.

The catalysed reaction is adenosine(37) in tRNA + dimethylallyl diphosphate = N(6)-dimethylallyladenosine(37) in tRNA + diphosphate. Functionally, catalyzes the transfer of a dimethylallyl group onto the adenine at position 37 in tRNAs that read codons beginning with uridine, leading to the formation of N6-(dimethylallyl)adenosine (i(6)A). The chain is tRNA dimethylallyltransferase from Psychrobacter cryohalolentis (strain ATCC BAA-1226 / DSM 17306 / VKM B-2378 / K5).